The following is a 93-amino-acid chain: Stromal cell-derived factor 1 (93 aa).

A signal peptide spans 1-21 (MNAKVVVVLVLVLTALCLSDG). The Receptor activation motif motif lies at 22–23 (KP). The tract at residues 29 to 33 (RCPCR) is receptor and heparin binding. Intrachain disulfides connect C30–C55 and C32–C71. 3 receptor binding regions span residues 39 to 41 (VAR), 48 to 50 (KIL), and 60 to 70 (VARLKNNNRQV). Heparin contacts are provided by residues 41–51 (RANVKHLKILN), R62, Q69, and K85.

The protein belongs to the intercrine alpha (chemokine CxC) family. Monomer or homodimer; in equilibrium. Dimer formation is induced by non acidic pH and the presence of multivalent anions, and by binding to CXCR4 or heparin. Monomeric form is required for full chemotactic activity and resistance to ischemia/reperfusion injury, whereas the dimeric form acts as a partial agonist of CXCR4, stimulating Ca2+ mobilization but with no chemotactic activity and instead acts as a selective antagonist that blocks chemotaxis induced by the monomeric form. Interacts with the N-terminus of ACKR3. Interacts with integrin subunit ITGB3 (via the allosteric site (site 2)). Interacts with TNFAIP6 (via Link domain). In terms of assembly, (Microbial infection) Interacts with molluscum contagiosum virus protein MC148. In terms of processing, processed forms SDF-1-beta(3-72) and SDF-1-alpha(3-67) are produced after secretion by proteolytic cleavage of isoforms Beta and Alpha, respectively. The N-terminal processing is probably achieved by DPP4. Isoform Alpha is first cleaved at the C-terminus to yield a SDF-1-alpha(1-67) intermediate before being processed at the N-terminus. The C-terminal processing of isoform Alpha is reduced by binding to heparin and, probably, cell surface proteoglycans. In terms of tissue distribution, isoform Alpha and isoform Beta are ubiquitously expressed, with highest levels detected in liver, pancreas and spleen. Isoform Gamma is mainly expressed in heart, with weak expression detected in several other tissues. Isoform Delta, isoform Epsilon and isoform Theta have highest expression levels in pancreas, with lower levels detected in heart, kidney, liver and spleen.

Its subcellular location is the secreted. Functionally, chemoattractant active on T-lymphocytes and monocytes but not neutrophils. Activates the C-X-C chemokine receptor CXCR4 to induce a rapid and transient rise in the level of intracellular calcium ions and chemotaxis. SDF-1-beta(3-72) and SDF-1-alpha(3-67) show a reduced chemotactic activity. Binding to cell surface proteoglycans seems to inhibit formation of SDF-1-alpha(3-67) and thus to preserve activity on local sites. Also binds to atypical chemokine receptor ACKR3, which activates the beta-arrestin pathway and acts as a scavenger receptor for SDF-1. Binds to the allosteric site (site 2) of integrins and activates integrins ITGAV:ITGB3, ITGA4:ITGB1 and ITGA5:ITGB1 in a CXCR4-independent manner. Acts as a positive regulator of monocyte migration and a negative regulator of monocyte adhesion via the LYN kinase. Stimulates migration of monocytes and T-lymphocytes through its receptors, CXCR4 and ACKR3, and decreases monocyte adherence to surfaces coated with ICAM-1, a ligand for beta-2 integrins. SDF1A/CXCR4 signaling axis inhibits beta-2 integrin LFA-1 mediated adhesion of monocytes to ICAM-1 through LYN kinase. Inhibits CXCR4-mediated infection by T-cell line-adapted HIV-1. Plays a protective role after myocardial infarction. Induces down-regulation and internalization of ACKR3 expressed in various cells. Has several critical functions during embryonic development; required for B-cell lymphopoiesis, myelopoiesis in bone marrow and heart ventricular septum formation. Stimulates the proliferation of bone marrow-derived B-cell progenitors in the presence of IL7 as well as growth of stromal cell-dependent pre-B-cells. The sequence is that of Stromal cell-derived factor 1 (CXCL12) from Homo sapiens (Human).